The sequence spans 500 residues: Protein PIGMENT DEFECTIVE 338, chloroplastic (500 aa).

Residues 1–63 (MQTLLCQPCK…FAFRGFSICR (63 aa)) constitute a chloroplast transit peptide. 3 consecutive S1 motif domains span residues 156–265 (KPGD…LSSR), 283–351 (NEPI…LSEK), and 362–431 (GTLL…LSIA).

It belongs to the bacterial ribosomal protein bS1 family. In terms of assembly, interacts with CRP1 and PRFB3. Present in leaves (at protein level). Confined to leaf chlorenchyma cells.

It is found in the plastid. It localises to the chloroplast. Functionally, RNA-binding protein that acts as an RNA chaperone to remodel RNA structure and activates their translation. Required for seed pigmentation. Necessary for chloroplast development and subsequent photosynthetic electron flow, as well as for non-photochemical quenching (NPQ). Rubisco regulatory factor which regulates the concerted biogenesis of NDH, PSI (including PsaA, PsaB, PsaD, PsaF, PsaL, PsaG, PsaK and NdhH) and Cytb(6)f (including PetA, PetB, PetC and PetD) complexes. Binds specifically to and involved in the post-transcriptional regulation of plastid-encoded mRNAs (e.g. rbcL, petA, petB, petD and Ycf1), thus modulating expression, cellular localization/compartmentalization, and photosynthetic function. This Arabidopsis thaliana (Mouse-ear cress) protein is Protein PIGMENT DEFECTIVE 338, chloroplastic.